The chain runs to 138 residues: Small ribosomal subunit protein uS11c (138 aa).

Residues 1–24 (MAKAIPRSGSRRSGRIGSRKSTRR) form a disordered region. Residues 9 to 24 (GSRRSGRIGSRKSTRR) show a composition bias toward basic residues.

This sequence belongs to the universal ribosomal protein uS11 family. Part of the 30S ribosomal subunit.

The protein resides in the plastid. The protein localises to the chloroplast. In Panax ginseng (Korean ginseng), this protein is Small ribosomal subunit protein uS11c.